We begin with the raw amino-acid sequence, 630 residues long: 1,4-alpha-glucan branching enzyme GlgB (630 aa).

The Nucleophile role is filled by D311. The active-site Proton donor is the E362.

The protein belongs to the glycosyl hydrolase 13 family. GlgB subfamily. As to quaternary structure, monomer.

It catalyses the reaction Transfers a segment of a (1-&gt;4)-alpha-D-glucan chain to a primary hydroxy group in a similar glucan chain.. The protein operates within glycan biosynthesis; glycogen biosynthesis. Catalyzes the formation of the alpha-1,6-glucosidic linkages in glycogen by scission of a 1,4-alpha-linked oligosaccharide from growing alpha-1,4-glucan chains and the subsequent attachment of the oligosaccharide to the alpha-1,6 position. This chain is 1,4-alpha-glucan branching enzyme GlgB, found in Aquifex aeolicus (strain VF5).